Consider the following 366-residue polypeptide: MALPNGISSKQELLEAQAHVWNHIYSYINSMSLKCAIQLGIPDAIHKHGNPITLSQLADALNINKAKSHGLFRLMRILVHSGFFDKVKVKVKVEGEDEEEEEDAYSLTPASRLLLRSEPLSVAPFALAMSDPVYTETWHHLSEWFRNDAVAAFDTKYGMTFPEYAVADDRLNVLFNEAMACDAGFVNSILTTECREIFDGLESMVDVGGGTGATAKGIAAAFPGMECTVLDLPNVVGGLKGSENLSFVSGDMFDFIPHADAIFMKFILHDWNDEECVKILKKCKEAISRSNNSCRKIILVEIVMEDEKETHEATETKLFFDMQMLAIITGKERSEKEWGKLFFDAGFTNYKITRVLGLRSVIEVFP.

Residues 207–210, 231–232, 251–252, and Lys265 contribute to the S-adenosyl-L-methionine site; these read VGGG, DL, and DM. His269 (proton acceptor) is an active-site residue.

This sequence belongs to the class I-like SAM-binding methyltransferase superfamily. Cation-independent O-methyltransferase family. COMT subfamily. Homodimer.

The enzyme catalyses 3,3',4',5,7,8-hexahydroxyflavone + S-adenosyl-L-methionine = 3,3',4',5,7-pentahydroxy-8-methoxyflavone + S-adenosyl-L-homocysteine + H(+). The catalysed reaction is 4',7,8-trihydroxyflavone + S-adenosyl-L-methionine = 4',7-dihydroxy-8-methoxyflavone + S-adenosyl-L-homocysteine + H(+). It carries out the reaction 8-hydroxy-7-methoxyflavone + S-adenosyl-L-methionine = 7,8-dimethoxyflavone + S-adenosyl-L-homocysteine + H(+). Its pathway is flavonoid metabolism. In terms of biological role, flavonoid 8-O-methyltransferase involved in the biosynthesis of polymethoxylated flavonoids natural products such as pebrellin, aroma compounds which contribute to the flavor of peppermint, and exhibit pharmacological activities such as anti-allergic, anti-oxidant, antibacterial, anti-proliferative, and anti-inflammatory effects. Catalyzes S-adenosylmethionine-dependent regioselective 8-O-methylation of flavonoids; active on various hydroxylated flavonoid substrates, including 7,8,3'4'-tetrahydroxy-flavone, 7,8,4'-trihydroxy-flavone and 8-hydroxy-flavone 7-methyl ether. The protein is 8-hydroxyquercetin 8-O-methyltransferase of Mentha piperita (Peppermint).